The sequence spans 430 residues: Inner membrane transport protein YbaT (430 aa).

Residues 1–14 lie on the Cytoplasmic side of the membrane; that stretch reads MMNTEGNNGNKPLG. Residues 15-35 traverse the membrane as a helical segment; it reads LWNVVSIGIGAMVGAGIFALL. The Periplasmic segment spans residues 36–38; the sequence is GQA. A helical transmembrane segment spans residues 39–59; sequence ALLMEASTWVAFAFGGIVAMF. Over 60 to 88 the chain is Cytoplasmic; it reads SGYAYARLGASYPSNGGIIDFFRRGLGNG. Residues 89–109 traverse the membrane as a helical segment; sequence VFSLALSLLYLLTLAVSIAMV. At 110-128 the chain is on the periplasmic side; sequence ARAFGAYAVQFLHEGSQEE. Residues 129–149 form a helical membrane-spanning segment; that stretch reads HLILLYALGIIAVMTLFNSLS. Residues 150-157 are Cytoplasmic-facing; it reads NHAVGRLE. A helical transmembrane segment spans residues 158–178; that stretch reads VILVGIKMMILLLLIIAGVWS. Topologically, residues 179 to 192 are periplasmic; that stretch reads LQPAHISVSAPPSS. Residues 193 to 213 form a helical membrane-spanning segment; sequence GAFFSCIGITFLAYAGFGMMA. The Cytoplasmic segment spans residues 214 to 228; sequence NAADKVKDPQVIMPR. A helical transmembrane segment spans residues 229-249; it reads AFLVAIGVTTLLYISLALVLL. Over 250–272 the chain is Periplasmic; the sequence is SDVSALELEKYADTAVAQAASPL. Residues 273–293 form a helical membrane-spanning segment; that stretch reads LGHVGYVIVVIGALLATASAI. The Cytoplasmic portion of the chain corresponds to 294–325; it reads NANLFAVFNIMDNMGSERELPKLMNKSLWRQS. A helical membrane pass occupies residues 326 to 346; that stretch reads TWGNIIVVVLIMLMTAALNLG. Residue Ser347 is a topological domain, periplasmic. The chain crosses the membrane as a helical span at residues 348-368; it reads LASVASATFLICYLAVFVVAI. Topologically, residues 369-379 are cytoplasmic; the sequence is RLRHDIHASLP. Residues 380–400 traverse the membrane as a helical segment; sequence ILIVGTLVMLLVIVGFIYSLW. The Periplasmic segment spans residues 401–403; it reads SQG. A helical membrane pass occupies residues 404 to 424; the sequence is SRALIWIIGSLLLSLIVAMVM. Residues 425 to 430 lie on the Cytoplasmic side of the membrane; it reads KRNKTV.

Belongs to the amino acid-polyamine-organocation (APC) superfamily.

Its subcellular location is the cell inner membrane. In terms of biological role, probable amino-acid or metabolite transport protein. This is Inner membrane transport protein YbaT (ybaT) from Escherichia coli (strain K12).